The following is an 876-amino-acid chain: DNA polymerase 1 (876 aa).

This sequence belongs to the DNA polymerase type-B family.

It catalyses the reaction DNA(n) + a 2'-deoxyribonucleoside 5'-triphosphate = DNA(n+1) + diphosphate. This polymerase possesses two enzymatic activities: DNA synthesis (polymerase) and an exonucleolytic activity that degrades single-stranded DNA in the 3'- to 5'-direction. The protein is DNA polymerase 1 (dpo1) of Sulfolobus acidocaldarius (strain ATCC 33909 / DSM 639 / JCM 8929 / NBRC 15157 / NCIMB 11770).